The primary structure comprises 532 residues: Cytochrome P450 99A2 (532 aa).

Residues 30 to 50 (SAATLTLVSLLTLPILLALLT) form a helical membrane-spanning segment. Cys-468 is a heme binding site. The chain crosses the membrane as a helical span at residues 473–493 (FGMVLLELIVARLLYYFDWSL).

Belongs to the cytochrome P450 family. Heme is required as a cofactor.

It localises to the membrane. Functionally, involved in momilactone phytoalexins biosynthesis. Participates in the biosynthetic steps between 9-beta-pimara-7,15-diene and 3-beta-hydroxy-9-beta-pimara-7,15-dien-19,6-beta-olide. The protein is Cytochrome P450 99A2 (CYP99A2) of Oryza sativa subsp. japonica (Rice).